The following is a 229-amino-acid chain: Ribonuclease 3 (229 aa).

The 130-residue stretch at 4–133 (WEELQESVGF…FIGALYLDNG (130 aa)) folds into the RNase III domain. Position 46 (Glu-46) interacts with Mg(2+). Asp-50 is a catalytic residue. 2 residues coordinate Mg(2+): Asp-119 and Glu-122. The active site involves Glu-122. Residues 159–228 (DYKTQLQEIV…AQFAINQLTH (70 aa)) enclose the DRBM domain.

It belongs to the ribonuclease III family. In terms of assembly, homodimer. It depends on Mg(2+) as a cofactor.

Its subcellular location is the cytoplasm. It carries out the reaction Endonucleolytic cleavage to 5'-phosphomonoester.. Digests double-stranded RNA. Involved in the processing of primary rRNA transcript to yield the immediate precursors to the large and small rRNAs (23S and 16S). Processes some mRNAs, and tRNAs when they are encoded in the rRNA operon. Processes pre-crRNA and tracrRNA of type II CRISPR loci if present in the organism. This Listeria welshimeri serovar 6b (strain ATCC 35897 / DSM 20650 / CCUG 15529 / CIP 8149 / NCTC 11857 / SLCC 5334 / V8) protein is Ribonuclease 3.